Here is a 193-residue protein sequence, read N- to C-terminus: Ion-translocating oxidoreductase complex subunit A (193 aa).

The next 6 membrane-spanning stretches (helical) occupy residues 5-25 (ILLIISTALINNFVLVKFLGL), 39-59 (IGMGMATTFVLTVASLSAYLV), 65-85 (IPLEAQFLRTLVFILVIAVIV), 102-122 (LLGIYLPLITTNCAVLGVALL), 134-154 (VLYGFGAALGFSLVLVLFAAL), and 171-191 (SIALITAGLMSLAFMGFTGLV).

This sequence belongs to the NqrDE/RnfAE family. In terms of assembly, the complex is composed of six subunits: RnfA, RnfB, RnfC, RnfD, RnfE and RnfG.

The protein resides in the cell inner membrane. Functionally, part of a membrane-bound complex that couples electron transfer with translocation of ions across the membrane. The chain is Ion-translocating oxidoreductase complex subunit A from Actinobacillus pleuropneumoniae serotype 5b (strain L20).